Consider the following 364-residue polypeptide: Mannose-1-phosphate guanyltransferase (364 aa).

Belongs to the transferase hexapeptide repeat family.

The protein localises to the cytoplasm. It catalyses the reaction alpha-D-mannose 1-phosphate + GTP + H(+) = GDP-alpha-D-mannose + diphosphate. Its pathway is nucleotide-sugar biosynthesis; GDP-alpha-D-mannose biosynthesis; GDP-alpha-D-mannose from alpha-D-mannose 1-phosphate (GTP route): step 1/1. Functionally, involved in cell wall synthesis where it is required for glycosylation. Involved in cell cycle progression through cell-size checkpoint. This chain is Mannose-1-phosphate guanyltransferase (MPG1), found in Pichia angusta (Yeast).